Here is a 127-residue protein sequence, read N- to C-terminus: uncharacterized protein (127 aa).

This is an uncharacterized protein from Escherichia coli (strain K12).